A 326-amino-acid polypeptide reads, in one-letter code: Pyruvate dehydrogenase E1 component subunit alpha (326 aa).

Heterodimer of an alpha and a beta chain. Thiamine diphosphate is required as a cofactor.

The enzyme catalyses N(6)-[(R)-lipoyl]-L-lysyl-[protein] + pyruvate + H(+) = N(6)-[(R)-S(8)-acetyldihydrolipoyl]-L-lysyl-[protein] + CO2. The pyruvate dehydrogenase complex catalyzes the overall conversion of pyruvate to acetyl-CoA and CO(2). It contains multiple copies of three enzymatic components: pyruvate dehydrogenase (E1), dihydrolipoamide acetyltransferase (E2) and lipoamide dehydrogenase (E3). This Rickettsia typhi (strain ATCC VR-144 / Wilmington) protein is Pyruvate dehydrogenase E1 component subunit alpha (pdhA).